A 154-amino-acid polypeptide reads, in one-letter code: Myoglobin (154 aa).

The region spanning 2-148 (GLSDGEWQQV…FRNDIAAKYK (147 aa)) is the Globin domain. Ser-4 carries the phosphoserine modification. His-65 lines the nitrite pocket. His-65 contacts O2. Residue His-94 participates in heme b binding.

The protein belongs to the globin family. In terms of assembly, monomeric.

It localises to the cytoplasm. The protein localises to the sarcoplasm. The enzyme catalyses Fe(III)-heme b-[protein] + nitric oxide + H2O = Fe(II)-heme b-[protein] + nitrite + 2 H(+). The catalysed reaction is H2O2 + AH2 = A + 2 H2O. Its function is as follows. Monomeric heme protein which primary function is to store oxygen and facilitate its diffusion within muscle tissues. Reversibly binds oxygen through a pentacoordinated heme iron and enables its timely and efficient release as needed during periods of heightened demand. Depending on the oxidative conditions of tissues and cells, and in addition to its ability to bind oxygen, it also has a nitrite reductase activity whereby it regulates the production of bioactive nitric oxide. Under stress conditions, like hypoxia and anoxia, it also protects cells against reactive oxygen species thanks to its pseudoperoxidase activity. This Equus quagga burchellii (Burchell's zebra) protein is Myoglobin (MB).